A 179-amino-acid polypeptide reads, in one-letter code: Probable chorismate pyruvate-lyase (179 aa).

Residues Arg-82, Leu-120, and Glu-165 each coordinate substrate.

Belongs to the UbiC family.

It is found in the cytoplasm. It carries out the reaction chorismate = 4-hydroxybenzoate + pyruvate. It participates in cofactor biosynthesis; ubiquinone biosynthesis. In terms of biological role, removes the pyruvyl group from chorismate, with concomitant aromatization of the ring, to provide 4-hydroxybenzoate (4HB) for the ubiquinone pathway. The sequence is that of Probable chorismate pyruvate-lyase from Vibrio vulnificus (strain YJ016).